Reading from the N-terminus, the 188-residue chain is HGPRTase-like protein 1 (188 aa).

It belongs to the purine/pyrimidine phosphoribosyltransferase family. Archaeal HPRT subfamily.

Functionally, may catalyze a purine salvage reaction, the substrate is unknown. This is HGPRTase-like protein 1 from Haloferax volcanii (strain ATCC 29605 / DSM 3757 / JCM 8879 / NBRC 14742 / NCIMB 2012 / VKM B-1768 / DS2) (Halobacterium volcanii).